Reading from the N-terminus, the 51-residue chain is Large ribosomal subunit protein bL33 (51 aa).

Belongs to the bacterial ribosomal protein bL33 family.

This chain is Large ribosomal subunit protein bL33, found in Acinetobacter baylyi (strain ATCC 33305 / BD413 / ADP1).